A 339-amino-acid chain; its full sequence is Dihydroorotate dehydrogenase (quinone) (339 aa).

FMN-binding positions include Ala61–Lys65 and Thr85. Lys65 serves as a coordination point for substrate. Asn110–Phe114 contacts substrate. Positions 138 and 171 each coordinate FMN. Substrate is bound at residue Asn171. Residue Ser174 is the Nucleophile of the active site. Asn176 is a binding site for substrate. FMN contacts are provided by Lys216 and Thr244. Position 245 to 246 (Asn245 to Thr246) interacts with substrate. FMN is bound by residues Gly267, Gly296, and Tyr317 to Ser318.

This sequence belongs to the dihydroorotate dehydrogenase family. Type 2 subfamily. Monomer. The cofactor is FMN.

The protein localises to the cell membrane. The catalysed reaction is (S)-dihydroorotate + a quinone = orotate + a quinol. The protein operates within pyrimidine metabolism; UMP biosynthesis via de novo pathway; orotate from (S)-dihydroorotate (quinone route): step 1/1. Functionally, catalyzes the conversion of dihydroorotate to orotate with quinone as electron acceptor. The protein is Dihydroorotate dehydrogenase (quinone) of Pseudomonas fluorescens (strain Pf0-1).